The chain runs to 285 residues: Phosphatidylglycerol--prolipoprotein diacylglyceryl transferase (285 aa).

The next 5 helical transmembrane spans lie at 17 to 37 (ALGL…GLTL), 43 to 63 (WYAL…LFLL), 78 to 98 (LVFW…VLFY), 113 to 133 (WEGG…IWWV), and 139 to 159 (LSWL…LFLG). An a 1,2-diacyl-sn-glycero-3-phospho-(1'-sn-glycerol)-binding site is contributed by R160. The next 3 membrane-spanning stretches (helical) occupy residues 195 to 215 (LYEA…QFFA), 223 to 243 (GKLA…VEWF), and 256 to 276 (GLTM…WLII).

This sequence belongs to the Lgt family.

The protein localises to the cell inner membrane. The catalysed reaction is L-cysteinyl-[prolipoprotein] + a 1,2-diacyl-sn-glycero-3-phospho-(1'-sn-glycerol) = an S-1,2-diacyl-sn-glyceryl-L-cysteinyl-[prolipoprotein] + sn-glycerol 1-phosphate + H(+). It participates in protein modification; lipoprotein biosynthesis (diacylglyceryl transfer). Functionally, catalyzes the transfer of the diacylglyceryl group from phosphatidylglycerol to the sulfhydryl group of the N-terminal cysteine of a prolipoprotein, the first step in the formation of mature lipoproteins. This chain is Phosphatidylglycerol--prolipoprotein diacylglyceryl transferase, found in Zymomonas mobilis subsp. mobilis (strain ATCC 31821 / ZM4 / CP4).